The following is a 262-amino-acid chain: Apolipoprotein A-Ia (262 aa).

The first 18 residues, 1 to 18 (MKFVALALTLLLALGSQA), serve as a signal peptide directing secretion. A 3 X approximate tandem repeats region spans residues 32–63 (YKAAALVYLNQVKDQAEKALDNLDGTDYEQYK). A run of 2 repeats spans residues 64 to 85 (LQLS…QALT) and 87 to 107 (YAET…ERVM). Residues 64–262 (LQLSESLTKL…YETIAKAIQA (199 aa)) form a 10 X approximate tandem repeats region. A 3; half-length repeat occupies 108–118 (TDVEDLRSKLE). A run of 5 repeats spans residues 119-140 (PHRA…EKLE), 141-162 (PVFQ…AKLE), 163-184 (PLMD…SKVV), 185-206 (PMVE…TMAA), and 207-228 (PYAE…EKIA). Residues 229-239 (PHTQDLQTRME) form a 9; half-length repeat. Copy 10 of the repeat occupies 240–262 (PYMENVRTTFAQMYETIAKAIQA).

Belongs to the apolipoprotein A1/A4/E family. In terms of assembly, homodimer. Interacts with naxe and yjefn3.

The protein resides in the secreted. Functionally, participates in the reverse transport of cholesterol from tissues to the liver for excretion by promoting cholesterol efflux from tissues and by acting as a cofactor for the lecithin cholesterol acyltransferase (LCAT). The protein is Apolipoprotein A-Ia of Danio rerio (Zebrafish).